The following is a 79-amino-acid chain: Small ribosomal subunit protein uS17 (79 aa).

The protein belongs to the universal ribosomal protein uS17 family. In terms of assembly, part of the 30S ribosomal subunit.

One of the primary rRNA binding proteins, it binds specifically to the 5'-end of 16S ribosomal RNA. In Paramagnetospirillum magneticum (strain ATCC 700264 / AMB-1) (Magnetospirillum magneticum), this protein is Small ribosomal subunit protein uS17.